The following is a 654-amino-acid chain: tRNA uridine 5-carboxymethylaminomethyl modification enzyme MnmG (654 aa).

17–22 (GGGHAG) is a binding site for FAD. 289–303 (GPRYCPSIEDKIVKF) provides a ligand contact to NAD(+).

This sequence belongs to the MnmG family. Homodimer. Heterotetramer of two MnmE and two MnmG subunits. It depends on FAD as a cofactor.

The protein resides in the cytoplasm. NAD-binding protein involved in the addition of a carboxymethylaminomethyl (cmnm) group at the wobble position (U34) of certain tRNAs, forming tRNA-cmnm(5)s(2)U34. The protein is tRNA uridine 5-carboxymethylaminomethyl modification enzyme MnmG of Prochlorococcus marinus (strain MIT 9515).